The sequence spans 182 residues: Flavodoxin (182 aa).

The 170-residue stretch at 4-173 (IGLFFGSDTG…RLKGWLSLIA (170 aa)) folds into the Flavodoxin-like domain.

It belongs to the flavodoxin family. FMN serves as cofactor.

In terms of biological role, low-potential electron donor to a number of redox enzymes. NifF is the electron donor to nitrogenase. The sequence is that of Flavodoxin (nifF) from Rhodobacter capsulatus (strain ATCC BAA-309 / NBRC 16581 / SB1003).